The sequence spans 306 residues: Transcription initiation factor IIB (306 aa).

2 repeat units span residues 122-205 (NELE…LREL) and 216-297 (DYVT…ELTQ).

It belongs to the TFIIB family.

Functionally, stabilizes TBP binding to an archaeal box-A promoter. Also responsible for recruiting RNA polymerase II to the pre-initiation complex (DNA-TBP-TFIIB). The polypeptide is Transcription initiation factor IIB (Saccharolobus shibatae (strain ATCC 51178 / DSM 5389 / JCM 8931 / NBRC 15437 / B12) (Sulfolobus shibatae)).